Here is a 681-residue protein sequence, read N- to C-terminus: Sodium-dependent phosphate transporter 1 (681 aa).

Helical transmembrane passes span N25–A45, A66–S86, L106–F126, I162–F182, A201–G221, and G234–V254. Residues V266–D295 form a disordered region. Phosphoserine is present on residues S269 and S273. Residues L275–D295 are compositionally biased toward basic and acidic residues. Residues V514–G534 traverse the membrane as a helical segment. The segment at K553–A560 is a. Transmembrane regions (helical) follow at residues A561–W581, F602–I622, and I652–A672.

It belongs to the inorganic phosphate transporter (PiT) (TC 2.A.20) family. Ubiquitously expressed.

The protein resides in the cell membrane. It catalyses the reaction 2 Na(+)(out) + phosphate(out) = 2 Na(+)(in) + phosphate(in). Functionally, sodium-phosphate symporter which preferentially transports the monovalent form of phosphate with a stoichiometry of two sodium ions per phosphate ion. May play a role in extracellular matrix and cartilage calcification as well as in vascular calcification. Essential for cell proliferation but this function is independent of its phosphate transporter activity. Its function is as follows. (Microbial infection) May function as a retroviral receptor but do not confer infection susceptibility to Gibbon Ape Leukemia Virus (GaLV), Simian sarcoma-associated virus (SSAV) and Feline leukemia virus subgroup B (FeLV-B). This is Sodium-dependent phosphate transporter 1 (Slc20a1) from Mus musculus (Mouse).